A 678-amino-acid chain; its full sequence is MLLHSTNSYSIFTDHEVETRTSRIRSAMFPDWIPPTSAAEATNSTTSIVEMMQMPTQQLKQSVMDLLTYEGSNDMSGLSLPDLVKLMCDHDESVVARAVHRAYMLSREDPNFFNAPGFDHRSFVEALMAASKSSNVNVRRNAIGALSHMSEQRGGPLLIFRSGGLAEIIRMLYDSLESVVHYAVTTLRNLLMHVSDSRAQARALNAVEALTPHLHKTNPKLLAQVADGLYFLLIDDAPSKITFLSLLGPQILVSILREYSDHRKLIYTVVRCIRSLSVCPSNKPALISLGCLPALYVELCTAKDERSQTAILVAMRNLSDSATNEENLTQLIIKLLEIIRVANDGMTACACGTLSNLTCNNTRNKQTVCSHGGIDALVTAIRRLPEVEEVTEPALCALRHCTARHSLAEEAQSELRFCQAFPVILDQLETLRTPVIKAALGVIRNSALLQTNLIELTQEQTANGHTAVSLTMDILRRAITAIEENPDIAVDGVPMWGVIEGAVSALHQLANHPAVAAACCDDIGQVGNPECPPFLDLLHRLLAHPRLGSMDDEVLEREILGLLYQLSKRPDGARAVESTGVSALLMESRGSQYKSVVTYANGVLSNLKRGDSAAIMNMSNSYDYEMSGSAADWQRDGLERELFAEMYPTNDGGHSESINMALNNSQMRPNHNWYDTDL.

5 ARM repeats span residues 153-192 (RGGP…NLLM), 280-319 (PSNK…RNLS), 320-359 (DSAT…NLTC), 362-403 (TRNK…HCTA), and 409-448 (EEAQ…NSAL).

This sequence belongs to the beta-catenin family. Component of a core catenin-cadherin complex consisting of hmr-1, hmp-1 and hmp-2; the complex localizes to adherens junctions. Interacts with hmr-1; the interaction is direct. May interact with hmp-1. Interacts with frk-1. As to expression, epidermal cells.

The protein localises to the cell junction. Its subcellular location is the adherens junction. Required for cell migration during body enclosure and cell shape changes during body elongation. Plays a role in recruitment of the cadherin protein hmr-1 to adherens junctions. This is Beta-catenin-like protein hmp-2 (hmp-2) from Caenorhabditis elegans.